Reading from the N-terminus, the 554-residue chain is Dihydroxy-acid dehydratase (554 aa).

Aspartate 78 contacts Mg(2+). Cysteine 119 is a [2Fe-2S] cluster binding site. Mg(2+) is bound by residues aspartate 120 and lysine 121. An N6-carboxylysine modification is found at lysine 121. Cysteine 191 contributes to the [2Fe-2S] cluster binding site. Glutamate 442 provides a ligand contact to Mg(2+). Residue serine 468 is the Proton acceptor of the active site.

This sequence belongs to the IlvD/Edd family. In terms of assembly, homodimer. [2Fe-2S] cluster is required as a cofactor. It depends on Mg(2+) as a cofactor.

It carries out the reaction (2R)-2,3-dihydroxy-3-methylbutanoate = 3-methyl-2-oxobutanoate + H2O. The enzyme catalyses (2R,3R)-2,3-dihydroxy-3-methylpentanoate = (S)-3-methyl-2-oxopentanoate + H2O. Its pathway is amino-acid biosynthesis; L-isoleucine biosynthesis; L-isoleucine from 2-oxobutanoate: step 3/4. It functions in the pathway amino-acid biosynthesis; L-valine biosynthesis; L-valine from pyruvate: step 3/4. Its function is as follows. Functions in the biosynthesis of branched-chain amino acids. Catalyzes the dehydration of (2R,3R)-2,3-dihydroxy-3-methylpentanoate (2,3-dihydroxy-3-methylvalerate) into 2-oxo-3-methylpentanoate (2-oxo-3-methylvalerate) and of (2R)-2,3-dihydroxy-3-methylbutanoate (2,3-dihydroxyisovalerate) into 2-oxo-3-methylbutanoate (2-oxoisovalerate), the penultimate precursor to L-isoleucine and L-valine, respectively. The polypeptide is Dihydroxy-acid dehydratase (Thermotoga petrophila (strain ATCC BAA-488 / DSM 13995 / JCM 10881 / RKU-1)).